The primary structure comprises 181 residues: Trafficking protein particle complex subunit 3 homolog (181 aa).

Cys70 is lipidated: S-palmitoyl cysteine.

Belongs to the TRAPP small subunits family. BET3 subfamily. Homodimer. Part of the multisubunit TRAPP (transport protein particle) complex.

Its subcellular location is the golgi apparatus. It is found in the cis-Golgi network. The protein localises to the endoplasmic reticulum. Its function is as follows. May play a role in vesicular transport from endoplasmic reticulum to Golgi. Required for the systemic spread of the RNAi response. The polypeptide is Trafficking protein particle complex subunit 3 homolog (trpp-3) (Caenorhabditis elegans).